Here is a 62-residue protein sequence, read N- to C-terminus: MPYVTVKMLEGRTDEQKRNLVEKVTEAVKETTGASEEKIVVFIEEMRKDHYAVAGKRLSDME.

Pro-2 serves as the catalytic Proton acceptor; via imino nitrogen. 9–12 lines the substrate pocket; it reads LEGR.

The protein belongs to the 4-oxalocrotonate tautomerase family. In terms of assembly, homohexamer.

The catalysed reaction is (2Z,4E)-2-hydroxyhexa-2,4-dienedioate = (3E)-2-oxohex-3-enedioate. Its function is as follows. Catalyzes both 1,3- and 1,5-keto-enol tautomerization of the diacid 2-hydroxymuconate (2-hydroxy-2,4-hexadienedioate) to produce 2-oxo-4-hexenedioate. This reaction is highly stereoselective and produces a mixture of stereoisomers, where the (3S)-isomer of 2-oxo-4-hexenedioate predominates. Also catalyzes the tautomerization of 2-hydroxymuconate to 2-oxo-3-hexenedioate, however this reaction is slower and occurs after the tautomerization of 2-hydroxymuconate to 2-oxo-4-hexenedioate. Using 2-hydroxy-2,4-pentadienoate, phenylenolpyruvate, (p-hydroxyphenyl)-enolpyruvate and 2-hydroxy-2,4-heptadiene-1,7-dioate, YwhB is a highly efficient 1,3-keto-enol tautomerase, but clearly not a 1,5-keto-enol tautomerase. Tautomerization of the two monoacids 2-hydroxy-2,4-pentadienoate and phenylenolpyruvate produces a mixture of stereoisomers, where the (3R)-isomers predominate. This is 2-hydroxymuconate tautomerase (ywhB) from Bacillus subtilis (strain 168).